Consider the following 40-residue polypeptide: Muscarinic m1-toxin4 (40 aa).

Residues C3 and C24 are joined by a disulfide bond.

The protein belongs to the three-finger toxin family. Short-chain subfamily. Aminergic toxin sub-subfamily. Monomer. In terms of processing, contains 4 disulfide bonds. In terms of tissue distribution, expressed by the venom gland.

Its subcellular location is the secreted. In terms of biological role, binds irreversibly and specifically to M1 (CHRM1) muscarinic acetylcholine receptors, blocking further binding of antagonists and preventing the action of agonists. The protein is Muscarinic m1-toxin4 of Dendroaspis angusticeps (Eastern green mamba).